A 930-amino-acid chain; its full sequence is Isoleucine--tRNA ligase (930 aa).

The short motif at 57–67 is the 'HIGH' region element; that stretch reads PYANGNIHVGH. Glutamate 554 lines the L-isoleucyl-5'-AMP pocket. Positions 595–599 match the 'KMSKS' region motif; it reads KMSKS. Residue lysine 598 coordinates ATP. Residues cysteine 888, cysteine 891, cysteine 908, and cysteine 911 each coordinate Zn(2+).

It belongs to the class-I aminoacyl-tRNA synthetase family. IleS type 1 subfamily. In terms of assembly, monomer. Requires Zn(2+) as cofactor.

It localises to the cytoplasm. The catalysed reaction is tRNA(Ile) + L-isoleucine + ATP = L-isoleucyl-tRNA(Ile) + AMP + diphosphate. Its function is as follows. Catalyzes the attachment of isoleucine to tRNA(Ile). As IleRS can inadvertently accommodate and process structurally similar amino acids such as valine, to avoid such errors it has two additional distinct tRNA(Ile)-dependent editing activities. One activity is designated as 'pretransfer' editing and involves the hydrolysis of activated Val-AMP. The other activity is designated 'posttransfer' editing and involves deacylation of mischarged Val-tRNA(Ile). In Streptococcus pneumoniae serotype 19F (strain G54), this protein is Isoleucine--tRNA ligase.